We begin with the raw amino-acid sequence, 503 residues long: Cytochrome P450 monooxygenase lnbC (503 aa).

A helical transmembrane segment spans residues 14–34 (VVLLLSSVWIAVHLVLAAYNV). N-linked (GlcNAc...) asparagine glycans are attached at residues asparagine 94 and asparagine 169. Cysteine 446 provides a ligand contact to heme.

Belongs to the cytochrome P450 family. It depends on heme as a cofactor.

It localises to the membrane. The protein operates within secondary metabolite biosynthesis. Cytochrome P450 monooxygenase; part of the lnb gene cluster that mediates the biosynthesis of diastereomeric piperazines. Lna and lnb clusters encode sets of enzymes that produce overlapping sets of previously undescribed metabolites such as piperazinomycin-like metabolites or morpholine. The lna and lnb biosynthetic pathways appear to be part of a signaling network that controls the formation of sclerotia, a resilient overwintering structure. One primary function of the non-canonical nonribosomal peptide synthetases lnaA and lnbA consists in the reduction of L-tyrosine. The presence in the clusters of tailoring enzymes such as the oxidoreductases lnaB, lnbB, lnaE or lnbE, as well as of the cytochrome P450 monooxygenases lnaC, lnaD, or lnbC, might explain formation of various diastereomeric piperazines. In Aspergillus flavus (strain ATCC 200026 / FGSC A1120 / IAM 13836 / NRRL 3357 / JCM 12722 / SRRC 167), this protein is Cytochrome P450 monooxygenase lnbC.